The sequence spans 500 residues: Probable cytosol aminopeptidase (500 aa).

The Mn(2+) site is built by K265 and D270. Residue K277 is part of the active site. Residues D288, D347, and E349 each coordinate Mn(2+). Residue R351 is part of the active site.

Belongs to the peptidase M17 family. It depends on Mn(2+) as a cofactor.

The protein resides in the cytoplasm. The enzyme catalyses Release of an N-terminal amino acid, Xaa-|-Yaa-, in which Xaa is preferably Leu, but may be other amino acids including Pro although not Arg or Lys, and Yaa may be Pro. Amino acid amides and methyl esters are also readily hydrolyzed, but rates on arylamides are exceedingly low.. It carries out the reaction Release of an N-terminal amino acid, preferentially leucine, but not glutamic or aspartic acids.. Presumably involved in the processing and regular turnover of intracellular proteins. Catalyzes the removal of unsubstituted N-terminal amino acids from various peptides. The chain is Probable cytosol aminopeptidase from Rickettsia typhi (strain ATCC VR-144 / Wilmington).